The primary structure comprises 121 residues: Dihydroneopterin aldolase (121 aa).

Residues Glu-16 and Met-111 each contribute to the substrate site.

Belongs to the archaeal dihydroneopterin aldolase family. As to quaternary structure, homotetramer.

The enzyme catalyses 7,8-dihydroneopterin = 6-hydroxymethyl-7,8-dihydropterin + glycolaldehyde. It participates in cofactor biosynthesis; 5,6,7,8-tetrahydromethanopterin biosynthesis. Functionally, catalyzes the conversion of 7,8-dihydroneopterin (H2Neo) to 6-hydroxymethyl-7,8-dihydropterin (6-HMD). The polypeptide is Dihydroneopterin aldolase (Methanopyrus kandleri (strain AV19 / DSM 6324 / JCM 9639 / NBRC 100938)).